A 350-amino-acid chain; its full sequence is ALA-interacting subunit 5 (350 aa).

The tract at residues 1 to 23 (MSSTAASSTVGGGGSSEISGVKK) is disordered. Ser2 is subject to N-acetylserine. A helical membrane pass occupies residues 50 to 70 (VILTFLVAGVVFIPLGVICLF). 2 N-linked (GlcNAc...) asparagine glycosylation sites follow: Asn181 and Asn231. A helical transmembrane segment spans residues 304 to 324 (FLGIAYLTVGSICLFLAVTFA).

Belongs to the CDC50/LEM3 family. In terms of assembly, interacts with ALA2 and ALA3 in a heterologous system. Expressed in roots, leaves, stems, flowers and siliques.

The protein localises to the golgi apparatus membrane. Its subcellular location is the prevacuolar compartment membrane. The protein resides in the endoplasmic reticulum membrane. In terms of biological role, required for the lipid transport activity of the ALA/ALIS P4-ATPase complex. The chain is ALA-interacting subunit 5 (ALIS5) from Arabidopsis thaliana (Mouse-ear cress).